The primary structure comprises 119 residues: Large ribosomal subunit protein bL20 (119 aa).

It belongs to the bacterial ribosomal protein bL20 family.

In terms of biological role, binds directly to 23S ribosomal RNA and is necessary for the in vitro assembly process of the 50S ribosomal subunit. It is not involved in the protein synthesizing functions of that subunit. This is Large ribosomal subunit protein bL20 from Caldanaerobacter subterraneus subsp. tengcongensis (strain DSM 15242 / JCM 11007 / NBRC 100824 / MB4) (Thermoanaerobacter tengcongensis).